Consider the following 359-residue polypeptide: Membrane-bound lytic murein transglycosylase C (359 aa).

The N-terminal stretch at 1–16 (MKKYLALALIAPLLIS) is a signal peptide. Cysteine 17 is lipidated: N-palmitoyl cysteine. Cysteine 17 carries the S-diacylglycerol cysteine lipid modification.

Belongs to the transglycosylase Slt family.

The protein resides in the cell outer membrane. The catalysed reaction is Exolytic cleavage of the (1-&gt;4)-beta-glycosidic linkage between N-acetylmuramic acid (MurNAc) and N-acetylglucosamine (GlcNAc) residues in peptidoglycan, from either the reducing or the non-reducing ends of the peptidoglycan chains, with concomitant formation of a 1,6-anhydrobond in the MurNAc residue.. Its function is as follows. Murein-degrading enzyme. May play a role in recycling of muropeptides during cell elongation and/or cell division. The protein is Membrane-bound lytic murein transglycosylase C of Escherichia coli (strain SE11).